The primary structure comprises 205 residues: Basonuclin zinc finger protein homolog (205 aa).

2 C2H2-type zinc fingers span residues 107–130 and 135–164; these read VACD…SAVH and HTCT…PKLH. Residues 145-168 are disordered; that stretch reads QFSSRRSRNRHSSNNNPKLHMPES.

As to expression, expressed in the VA and VB motor neurons and at lower levels in the SABV neuron pair.

The protein localises to the nucleus. Its function is as follows. Probable transcription factor. Involved in motor neuron fate determination and maintenance, acting as a transcriptional repressor to counteract gene activation by transcription factor unc-3 in a subset of motor neurons. Required throughout development to repress transcription by unc-3, probably acting by binding to specific promoter elements. Represses expression of DA and DB motor neuron-specific effector genes, such as unc-129 and unc-53, in VA and VB motor neurons. In Caenorhabditis elegans, this protein is Basonuclin zinc finger protein homolog.